The primary structure comprises 637 residues: Tumor protein p73 (637 aa).

Positions 1-46 are transactivation; sequence MAQSTTTSPDGGTTFEHLWSSLEPDSTYFDLPQSSRGNNEVVGGTD. Thr-27 carries the phosphothreonine modification. Tyr-28 is modified (phosphotyrosine; by SRC and HCK). Positions 78-104 are disordered; the sequence is RAASASPYTPEHAASVPTHSPYAQPSS. A compositionally biased stretch (polar residues) spans 94-104; that stretch reads PTHSPYAQPSS. A Phosphotyrosine modification is found at Tyr-99. The interval 131–310 is DNA-binding; sequence FQQSSTAKSA…DRKADEDHYR (180 aa). Zn(2+)-binding residues include Cys-194, His-197, Cys-258, and Cys-262. Positions 301–311 are enriched in basic and acidic residues; the sequence is DRKADEDHYRE. A disordered region spans residues 301 to 351; sequence DRKADEDHYREQQALNESSAKNGAASKRAFKQSPPAVPALGPGVKKRRHGD. Residues 345-380 form an interaction with HIPK2 region; that stretch reads KKRRHGDEDTYYLQVRGRENFEILMKLKESLELMEL. An oligomerization region spans residues 345–386; that stretch reads KKRRHGDEDTYYLQVRGRENFEILMKLKESLELMELVPQPLV. The short motif at 483–487 is the PPxY motif element; that stretch reads PPPPY. The SAM domain occupies 485 to 551; sequence PPYHADPSLV…WRGLQDLKQG (67 aa). Lys-628 is covalently cross-linked (Glycyl lysine isopeptide (Lys-Gly) (interchain with G-Cter in SUMO); in isoform Alpha). Lys-628 participates in a covalent cross-link: Glycyl lysine isopeptide (Lys-Gly) (interchain with G-Cter in SUMO2).

This sequence belongs to the p53 family. In terms of assembly, found in a complex with p53/TP53 and CABLES1. The C-terminal oligomerization domain binds to the ABL1 tyrosine kinase SH3 domain. Interacts with HECW2. Isoforms Alpha and Beta interact with HIPK2. Isoform Alpha interacts with RANBP9. Interacts with WWOX. Isoform Beta interacts homotypically and with p53, whereas isoform Alpha does not. Interacts (via SAM domain) with FBXO45 (via B30.2/SPRY domain). Interacts with YAP1 (phosphorylated form). Interacts with HCK (via SH3 domain); this inhibits TP73 activity and degradation. The cofactor is Zn(2+). Post-translationally, isoform Alpha (but not isoform Beta) is sumoylated on Lys-628, which potentiates proteasomal degradation but does not affect transcriptional activity. Polyubiquitinated by RCHY1/PIRH2; leading to its degradation by the proteasome.

It localises to the nucleus. The protein resides in the cytoplasm. In terms of biological role, participates in the apoptotic response to DNA damage. May be a tumor suppressor protein. Is an activator of FOXJ1 expression, essential for the positive regulation of lung ciliated cell differentiation. The polypeptide is Tumor protein p73 (TP73) (Chlorocebus aethiops (Green monkey)).